A 362-amino-acid chain; its full sequence is Quinolone epoxide rearrangement protein penF (362 aa).

Residue His-220 is part of the active site. Residue Glu-222 is the Broensted acid of the active site.

It belongs to the quinolone epoxide rearrangement protein penF family.

The catalysed reaction is [(1'E)-5'-(3',3'-dimethyloxiran-2'-yl)-3'-hydroxy-3'-methylpent-1'-en-1'-yl]-quinolinone B = yaequinolone D. It participates in secondary metabolite biosynthesis. The protein operates within alkaloid biosynthesis. Its pathway is mycotoxin biosynthesis. Functionally, quinolone epoxide rearrangement protein; part of the gene cluster that mediates the biosynthesis of penigequinolones, potent insecticidal alkaloids that contain a highly modified 10-carbon prenyl group. The first stage is catalyzed by the nonribosomal peptide synthetase penN that condenses anthranilic acid and O-methyl-L-tyrosine to produce 4'-methoxycyclopeptin. 4'-methoxycyclopeptin is then converted to 4'-methoxydehydrocyclopeptin by the ketoglutarate-dependent dioxygenase penM through dehydrogenation to form a double bond between C-alpha and C-beta of the O-methyltyrosine side chain. PenM also converts its first product methoxydehydrocyclopeptin to 4'-methoxycyclopenin. The following conversion of 4'methoxycyclopenin into 4'-methoxyviridicatin is catalyzed by the cyclopenase penL. 4'-methoxyviridicatin is the precursor of quinolone natural products, and is further converted to quinolinone B. The prenyltransferase penI then catalyzes the canonical Friedel-Crafts alkylation of quinolinone B with dimethylallyl cation to yield dimethylallyl quinolone, which is subjected to FAD-dependent dehydrogenation by the FAD-linked oxidoreductase penH to yield conjugated aryl diene. The delta(3') double bond then serves as the site of the second alkylation with DMAPP catalyzed by the prenyltransferase penG to yield a carbenium ion intermediate, which can be attacked by H(2)O to yield a styrenyl quinolone containing a C3'-hydroxyprenyl chain, or undergo cyclization to yield yaequinolones J1 and J2. The conversion of the styrenyl quinolone into the tetrahydrofuran-containing yaequinolone C is performed by the FAD-dependent monooxygenase penE and involves epoxidation of the terminal C7'-C8' olefin, followed by epoxide ring opening initiated by the C3' hydroxyl group. The predicted cysteine hydrolase penJ acts as an epoxide hydrolase that enhances the rate of the 5-exo-tet cyclization step, increasing the yield of yaequinolone C. PenF catalyzes the cationic rearrangement of the epoxide formed by penE (before ring opening to produce yaequinolone C) into yaequinolone D. Finally, the short-chain dehydrogenase/reductase (SDR)-like reductase penD, catalyzes both the dehydration of yaequinolone D and the reduction of the resulting oxonium to yield penigequinolone. This chain is Quinolone epoxide rearrangement protein penF, found in Penicillium thymicola.